A 419-amino-acid chain; its full sequence is UDP-N-acetylglucosamine 1-carboxyvinyltransferase 2 (419 aa).

Residue 22 to 23 participates in phosphoenolpyruvate binding; the sequence is KN. Arginine 92 is a binding site for UDP-N-acetyl-alpha-D-glucosamine. Cysteine 116 acts as the Proton donor in catalysis. Cysteine 116 is subject to 2-(S-cysteinyl)pyruvic acid O-phosphothioketal. UDP-N-acetyl-alpha-D-glucosamine contacts are provided by residues 121 to 125, aspartate 306, and isoleucine 328; that span reads RPIDL.

This sequence belongs to the EPSP synthase family. MurA subfamily.

The protein localises to the cytoplasm. It catalyses the reaction phosphoenolpyruvate + UDP-N-acetyl-alpha-D-glucosamine = UDP-N-acetyl-3-O-(1-carboxyvinyl)-alpha-D-glucosamine + phosphate. The protein operates within cell wall biogenesis; peptidoglycan biosynthesis. Functionally, cell wall formation. Adds enolpyruvyl to UDP-N-acetylglucosamine. In Streptococcus pyogenes serotype M18 (strain MGAS8232), this protein is UDP-N-acetylglucosamine 1-carboxyvinyltransferase 2.